The primary structure comprises 120 residues: Large ribosomal subunit protein uL18 (120 aa).

The protein belongs to the universal ribosomal protein uL18 family. Part of the 50S ribosomal subunit; part of the 5S rRNA/L5/L18/L25 subcomplex. Contacts the 5S and 23S rRNAs.

In terms of biological role, this is one of the proteins that bind and probably mediate the attachment of the 5S RNA into the large ribosomal subunit, where it forms part of the central protuberance. The polypeptide is Large ribosomal subunit protein uL18 (Exiguobacterium sp. (strain ATCC BAA-1283 / AT1b)).